The chain runs to 104 residues: Circadian clock oscillator protein KaiB (104 aa).

It belongs to the KaiB family. In terms of assembly, the KaiABC complex composition changes during the circadian cycle to control KaiC phosphorylation. Complexes KaiC(6), KaiA(2-4):KaiC(6), KaiB(6):KaiC(6) and KaiC(6):KaiB(6):KaiA(12) are among the most important forms, many form cooperatively. Undergoes a major conformational rearrangment; in the free state forms homotetramers as a dimer of dimers. When bound to the CI domain of KaiC switches to a monomeric thioredoxin-fold (KaiB(fs)). KaiB(fs) binds CikA, leading it to dephosphorylate phospho-RpaA.

Key component of the KaiABC oscillator complex, which constitutes the main circadian regulator in cyanobacteria. Complex composition changes during the circadian cycle to control KaiC phosphorylation. KaiA stimulates KaiC autophosphorylation, while KaiB sequesters KaiA, leading to KaiC autodephosphorylation. Phospho-Ser-431 KaiC accumulation triggers binding of KaiB to form the KaiB(6):KaiC(6) complex, leading to changes in output regulators CikA and SasA. KaiB switches to a thioredoxin-like fold (KaiB(fs)) when bound to KaiC. KaiB(6):KaiC(6) formation exposes a site for KaiA binding that sequesters KaiA from KaiC, making the KaiC(6):KaiB(6):KaiA(12) complex that results in KaiC autodephosphorylation. In terms of biological role, a metamorphic protein which reversibly switches between an inactive tetrameric fold and a rare, thioredoxin-like monomeric fold (KaiB(fs)). KaiB(fs) binds phospho-KaiC, KaiA and CikA. KaiA and CikA compete for binding to KaiB(fs), and KaiB(fs) and SasA compete for binding to KaiC, thus the clock oscillator and output signal pathway are tightly coupled. The polypeptide is Circadian clock oscillator protein KaiB (Parasynechococcus marenigrum (strain WH8102)).